The following is a 901-amino-acid chain: Alanine--tRNA ligase (901 aa).

His-600, His-604, Cys-704, and His-708 together coordinate Zn(2+).

This sequence belongs to the class-II aminoacyl-tRNA synthetase family. The cofactor is Zn(2+).

It is found in the cytoplasm. The catalysed reaction is tRNA(Ala) + L-alanine + ATP = L-alanyl-tRNA(Ala) + AMP + diphosphate. Functionally, catalyzes the attachment of alanine to tRNA(Ala) in a two-step reaction: alanine is first activated by ATP to form Ala-AMP and then transferred to the acceptor end of tRNA(Ala). Also edits incorrectly charged Ser-tRNA(Ala) and Gly-tRNA(Ala) via its editing domain. The sequence is that of Alanine--tRNA ligase from Ignicoccus hospitalis (strain KIN4/I / DSM 18386 / JCM 14125).